The sequence spans 273 residues: MTKLIIHLVSDSSVQTAKYAANSALAQFTSIKPKLYHWPMIRNLELLNEVLSKIESKHGIVLYTIADQELRKTLTKFCYELKIPCISIIGKIIKEMSVFSDIEIEKEQNFNYKFDKTYFDTLNAIDYAIRHDDGQMLNELPEADIILIGPSRTSKTPTSVFLAYNGLKAANIPYVYNCPFPDFIEKDIDQLVVGLVINPNRLIEIREARLNLLQINENKSYTDFNIIQKECLEVRKICEQRNWPVIDVSTRSIEETAALIMRIYYNRKNKYNK.

149 to 156 (GPSRTSKT) contacts ADP.

This sequence belongs to the pyruvate, phosphate/water dikinase regulatory protein family. PDRP subfamily.

It catalyses the reaction N(tele)-phospho-L-histidyl/L-threonyl-[pyruvate, phosphate dikinase] + ADP = N(tele)-phospho-L-histidyl/O-phospho-L-threonyl-[pyruvate, phosphate dikinase] + AMP + H(+). It carries out the reaction N(tele)-phospho-L-histidyl/O-phospho-L-threonyl-[pyruvate, phosphate dikinase] + phosphate + H(+) = N(tele)-phospho-L-histidyl/L-threonyl-[pyruvate, phosphate dikinase] + diphosphate. Its function is as follows. Bifunctional serine/threonine kinase and phosphorylase involved in the regulation of the pyruvate, phosphate dikinase (PPDK) by catalyzing its phosphorylation/dephosphorylation. This chain is Putative pyruvate, phosphate dikinase regulatory protein, found in Rickettsia canadensis (strain McKiel).